Here is a 434-residue protein sequence, read N- to C-terminus: Nicotinate phosphoribosyltransferase (434 aa).

Residue histidine 242 is modified to Phosphohistidine; by autocatalysis.

This sequence belongs to the NAPRTase family. Post-translationally, transiently phosphorylated on a His residue during the reaction cycle. Phosphorylation strongly increases the affinity for substrates and increases the rate of nicotinate D-ribonucleotide production. Dephosphorylation regenerates the low-affinity form of the enzyme, leading to product release.

The catalysed reaction is nicotinate + 5-phospho-alpha-D-ribose 1-diphosphate + ATP + H2O = nicotinate beta-D-ribonucleotide + ADP + phosphate + diphosphate. Its pathway is cofactor biosynthesis; NAD(+) biosynthesis; nicotinate D-ribonucleotide from nicotinate: step 1/1. Catalyzes the synthesis of beta-nicotinate D-ribonucleotide from nicotinate and 5-phospho-D-ribose 1-phosphate at the expense of ATP. In Brucella melitensis biotype 1 (strain ATCC 23456 / CCUG 17765 / NCTC 10094 / 16M), this protein is Nicotinate phosphoribosyltransferase.